A 333-amino-acid polypeptide reads, in one-letter code: Ketol-acid reductoisomerase (NADP(+)) (333 aa).

In terms of domain architecture, KARI N-terminal Rossmann spans 1–171; it reads MSNDTQPTIA…GGARANIIKT (171 aa). NADP(+) is bound by residues 14-17, Arg-37, Thr-42, and 72-75; these read YGSQ and DMVQ. His-97 is a catalytic residue. Position 123 (Gly-123) interacts with NADP(+). The KARI C-terminal knotted domain maps to 172–317; that stretch reads TFKEETETDL…KKLRAKMVWL (146 aa). 4 residues coordinate Mg(2+): Asp-180, Glu-184, Glu-216, and Glu-220. Ser-241 is a binding site for substrate.

Belongs to the ketol-acid reductoisomerase family. Mg(2+) is required as a cofactor.

The catalysed reaction is (2R)-2,3-dihydroxy-3-methylbutanoate + NADP(+) = (2S)-2-acetolactate + NADPH + H(+). The enzyme catalyses (2R,3R)-2,3-dihydroxy-3-methylpentanoate + NADP(+) = (S)-2-ethyl-2-hydroxy-3-oxobutanoate + NADPH + H(+). It functions in the pathway amino-acid biosynthesis; L-isoleucine biosynthesis; L-isoleucine from 2-oxobutanoate: step 2/4. It participates in amino-acid biosynthesis; L-valine biosynthesis; L-valine from pyruvate: step 2/4. In terms of biological role, involved in the biosynthesis of branched-chain amino acids (BCAA). Catalyzes an alkyl-migration followed by a ketol-acid reduction of (S)-2-acetolactate (S2AL) to yield (R)-2,3-dihydroxy-isovalerate. In the isomerase reaction, S2AL is rearranged via a Mg-dependent methyl migration to produce 3-hydroxy-3-methyl-2-ketobutyrate (HMKB). In the reductase reaction, this 2-ketoacid undergoes a metal-dependent reduction by NADPH to yield (R)-2,3-dihydroxy-isovalerate. The polypeptide is Ketol-acid reductoisomerase (NADP(+)) (Xanthomonas campestris pv. campestris (strain 8004)).